Reading from the N-terminus, the 185-residue chain is Large ribosomal subunit protein uL5 (185 aa).

It belongs to the universal ribosomal protein uL5 family. As to quaternary structure, part of the 50S ribosomal subunit; part of the 5S rRNA/L5/L18/L25 subcomplex. Contacts the 5S rRNA and the P site tRNA. Forms a bridge to the 30S subunit in the 70S ribosome.

Functionally, this is one of the proteins that bind and probably mediate the attachment of the 5S RNA into the large ribosomal subunit, where it forms part of the central protuberance. In the 70S ribosome it contacts protein S13 of the 30S subunit (bridge B1b), connecting the 2 subunits; this bridge is implicated in subunit movement. Contacts the P site tRNA; the 5S rRNA and some of its associated proteins might help stabilize positioning of ribosome-bound tRNAs. The sequence is that of Large ribosomal subunit protein uL5 from Rhodopseudomonas palustris (strain BisB5).